The chain runs to 698 residues: Ion-translocating oxidoreductase complex subunit C (698 aa).

4Fe-4S ferredoxin-type domains are found at residues 366-397 (TEMG…QQLY) and 407-436 (KARN…VQYY). [4Fe-4S] cluster contacts are provided by cysteine 377, cysteine 380, cysteine 383, cysteine 387, cysteine 416, cysteine 419, cysteine 422, and cysteine 426.

The protein belongs to the 4Fe4S bacterial-type ferredoxin family. RnfC subfamily. As to quaternary structure, the complex is composed of six subunits: RnfA, RnfB, RnfC, RnfD, RnfE and RnfG. The cofactor is [4Fe-4S] cluster.

It localises to the cell inner membrane. Functionally, part of a membrane-bound complex that couples electron transfer with translocation of ions across the membrane. The protein is Ion-translocating oxidoreductase complex subunit C of Yersinia pseudotuberculosis serotype O:3 (strain YPIII).